We begin with the raw amino-acid sequence, 269 residues long: Formamidopyrimidine-DNA glycosylase (269 aa).

Pro-2 acts as the Schiff-base intermediate with DNA in catalysis. Glu-3 (proton donor) is an active-site residue. The active-site Proton donor; for beta-elimination activity is Lys-57. Positions 90, 109, and 150 each coordinate DNA. Residues 235-269 (QVYGRGGEPCRVCGTPIQMAKHGQRSTFFCPACQH) form an FPG-type zinc finger. Arg-259 serves as the catalytic Proton donor; for delta-elimination activity.

Belongs to the FPG family. Monomer. Requires Zn(2+) as cofactor.

The enzyme catalyses Hydrolysis of DNA containing ring-opened 7-methylguanine residues, releasing 2,6-diamino-4-hydroxy-5-(N-methyl)formamidopyrimidine.. It carries out the reaction 2'-deoxyribonucleotide-(2'-deoxyribose 5'-phosphate)-2'-deoxyribonucleotide-DNA = a 3'-end 2'-deoxyribonucleotide-(2,3-dehydro-2,3-deoxyribose 5'-phosphate)-DNA + a 5'-end 5'-phospho-2'-deoxyribonucleoside-DNA + H(+). Its function is as follows. Involved in base excision repair of DNA damaged by oxidation or by mutagenic agents. Acts as a DNA glycosylase that recognizes and removes damaged bases. Has a preference for oxidized purines, such as 7,8-dihydro-8-oxoguanine (8-oxoG). Has AP (apurinic/apyrimidinic) lyase activity and introduces nicks in the DNA strand. Cleaves the DNA backbone by beta-delta elimination to generate a single-strand break at the site of the removed base with both 3'- and 5'-phosphates. This is Formamidopyrimidine-DNA glycosylase from Sodalis glossinidius (strain morsitans).